A 495-amino-acid polypeptide reads, in one-letter code: Ankyrin repeat domain-containing protein 34A (495 aa).

ANK repeat units follow at residues 4–33 (TEGH…YVNE), 37–72 (QGET…DPNI), 76–106 (LGRT…DPSV), and 110–139 (AGAS…AKGT). At Gln-15 the chain carries N5-methylglutamine. Composition is skewed to polar residues over residues 147 to 162 (DTSP…YLNS) and 180 to 191 (VCTSPSEVQLQT). The disordered stretch occupies residues 147–495 (DTSPSGTKKT…SLGGPGEPGR (349 aa)). A compositionally biased stretch (basic and acidic residues) spans 203-213 (AQEEEEKRDVF). Residues 223-232 (DPSPSEPLPK) are compositionally biased toward pro residues. Residues 233–242 (PPRHPPKPLK) are compositionally biased toward basic residues. Thr-315 carries the phosphothreonine modification. Residues 375–385 (SVSSPRQSQES) show a composition bias toward polar residues. Residues 462-472 (RTKRKLVRRHS) show a composition bias toward basic residues. A compositionally biased stretch (gly residues) spans 485 to 495 (QSLGGPGEPGR).

The protein belongs to the ANKRD34 family. Methylated at Gln-15 by N6AMT1.

The sequence is that of Ankyrin repeat domain-containing protein 34A (Ankrd34a) from Rattus norvegicus (Rat).